The following is a 93-amino-acid chain: Small ribosomal subunit protein uS19 (93 aa).

Belongs to the universal ribosomal protein uS19 family.

Its function is as follows. Protein S19 forms a complex with S13 that binds strongly to the 16S ribosomal RNA. The sequence is that of Small ribosomal subunit protein uS19 from Frankia casuarinae (strain DSM 45818 / CECT 9043 / HFP020203 / CcI3).